Consider the following 174-residue polypeptide: MKKTPSPTDEETQLFRDAIKGTRKIKQDTIRADLRPVKQKRELRESREKLGVDHYFSDEYQPHLEADGPTRYVREDVSKFELKKLKRGSYPPEIYLDLHGMNQQQAKQELAALLTLCQKENIHVASVMHGIGKHILKQRIPSWLAQHPNVQAFHQAPREWGGDSAILVLLDIEE.

A Smr domain is found at 96-171 (LDLHGMNQQQ…GDSAILVLLD (76 aa)).

This sequence belongs to the SmrB family. As to quaternary structure, associates with collided ribosomes, but not with correctly translating polysomes.

Functionally, acts as a ribosome collision sensor. Detects stalled/collided disomes (pairs of ribosomes where the leading ribosome is stalled and a second ribosome has collided with it) and endonucleolytically cleaves mRNA at the 5' boundary of the stalled ribosome. Stalled/collided disomes form a new interface (primarily via the 30S subunits) that binds SmrB. Cleaved mRNA becomes available for tmRNA ligation, leading to ribosomal subunit dissociation and rescue of stalled ribosomes. The chain is Ribosome rescue factor SmrB from Aeromonas hydrophila subsp. hydrophila (strain ATCC 7966 / DSM 30187 / BCRC 13018 / CCUG 14551 / JCM 1027 / KCTC 2358 / NCIMB 9240 / NCTC 8049).